A 496-amino-acid polypeptide reads, in one-letter code: MYFQHQFSSLNLNSFLPEGILIFNIIFILILDLVSQKENKSMLVKISFIGLLLSMLTLIQQWYHESTIAFLGSFEVNHFTTCFRLIISLCCILCIPLSFEYIKCSGIRLTEFIIFLLFTTLGAMILSSANDLITIFISLECLGLGSYLLTGYVKKDIRSNEAGMKYLIIGGTSSSIFAYGLSWLYGLSGGSIYLKSIAYSFSHLNPSYSLASWFAYICIIVGIGFKLSLVPFHRWSPDVYEGSPTPVVAFLSIISKAGALALTIRISDIIFPILEQDSNSILQILAILSMIVGNLLAMVETSMKRILTYSSIAQAGYLLIGIVAGRNNGYASLLVYMIFYLFMNIGAFSCIILFGLRTGTDQIRDYTGLYTKDPWLASCLSLCLLSLAGIPPLTGFFGKILLFWSAWQSGFYFLVMTGIFTSIVSIYYYIRIVKFLVVAKEKDISYYVKKYSTYKSNSLMKQNPIELNIYLCTFISGFVGIFMNPVIYFAQQSILK.

14 consecutive transmembrane segments (helical) span residues 14 to 34 (SFLP…LDLV), 42 to 62 (MLVK…IQQW), 79 to 99 (FTTC…PLSF), 109 to 129 (LTEF…LSSA), 133 to 153 (ITIF…TGYV), 167 to 187 (LIIG…LYGL), 210 to 230 (LASW…LSLV), 244 to 264 (PTPV…ALTI), 281 to 301 (ILQI…MVET), 305 to 325 (RILT…IVAG), 334 to 354 (LVYM…IILF), 377 to 397 (ASCL…TGFF), 400 to 420 (ILLF…TGIF), and 469 to 489 (IYLC…VIYF).

It belongs to the complex I subunit 2 family. In terms of assembly, NDH is composed of at least 16 different subunits, 5 of which are encoded in the nucleus.

It is found in the plastid. The protein localises to the chloroplast thylakoid membrane. The enzyme catalyses a plastoquinone + NADH + (n+1) H(+)(in) = a plastoquinol + NAD(+) + n H(+)(out). The catalysed reaction is a plastoquinone + NADPH + (n+1) H(+)(in) = a plastoquinol + NADP(+) + n H(+)(out). NDH shuttles electrons from NAD(P)H:plastoquinone, via FMN and iron-sulfur (Fe-S) centers, to quinones in the photosynthetic chain and possibly in a chloroplast respiratory chain. The immediate electron acceptor for the enzyme in this species is believed to be plastoquinone. Couples the redox reaction to proton translocation, and thus conserves the redox energy in a proton gradient. The polypeptide is NAD(P)H-quinone oxidoreductase subunit 2, chloroplastic (Chara vulgaris (Common stonewort)).